The sequence spans 129 residues: Modulator protein MzrA (129 aa).

Topologically, residues 1-14 are cytoplasmic; sequence MINFRGRFGRPLWH. Residues 15–35 form a helical membrane-spanning segment; the sequence is YLVLPVVLLLLAVILLTPMIV. The Periplasmic segment spans residues 36–129; that stretch reads QTESTLKIRP…VFRSNQQNLG (94 aa).

This sequence belongs to the MzrA family. As to quaternary structure, interacts with EnvZ.

The protein localises to the cell inner membrane. In terms of biological role, modulates the activity of the EnvZ/OmpR two-component regulatory system, probably by directly modulating EnvZ enzymatic activity and increasing stability of phosphorylated OmpR. The protein is Modulator protein MzrA of Yersinia pestis (strain Pestoides F).